The chain runs to 344 residues: UDP-N-acetylenolpyruvoylglucosamine reductase (344 aa).

Positions 19–189 (INVTAKKIIF…IAVGIKIKKN (171 aa)) constitute an FAD-binding PCMH-type domain. R165 is a catalytic residue. S235 acts as the Proton donor in catalysis. Residue E331 is part of the active site.

It belongs to the MurB family. Requires FAD as cofactor.

It localises to the cytoplasm. The enzyme catalyses UDP-N-acetyl-alpha-D-muramate + NADP(+) = UDP-N-acetyl-3-O-(1-carboxyvinyl)-alpha-D-glucosamine + NADPH + H(+). It participates in cell wall biogenesis; peptidoglycan biosynthesis. In terms of biological role, cell wall formation. The protein is UDP-N-acetylenolpyruvoylglucosamine reductase of Buchnera aphidicola subsp. Schizaphis graminum (strain Sg).